A 552-amino-acid chain; its full sequence is Formate--tetrahydrofolate ligase (552 aa).

Residue 63–70 participates in ATP binding; that stretch reads TPFGEGKT.

It belongs to the formate--tetrahydrofolate ligase family.

The enzyme catalyses (6S)-5,6,7,8-tetrahydrofolate + formate + ATP = (6R)-10-formyltetrahydrofolate + ADP + phosphate. The protein operates within one-carbon metabolism; tetrahydrofolate interconversion. In Caldicellulosiruptor bescii (strain ATCC BAA-1888 / DSM 6725 / KCTC 15123 / Z-1320) (Anaerocellum thermophilum), this protein is Formate--tetrahydrofolate ligase.